The sequence spans 494 residues: Cytochrome P450 monooxygenase ccsD (494 aa).

A helical transmembrane segment spans residues 5-25 (ISPRTLVLLAVTCSLLVLYFS). A heme-binding site is contributed by cysteine 438. N-linked (GlcNAc...) asparagine glycans are attached at residues asparagine 445 and asparagine 477.

This sequence belongs to the cytochrome P450 family. It depends on heme as a cofactor.

It localises to the membrane. Its pathway is mycotoxin biosynthesis. Its function is as follows. Cytochrome P450 monooxygenase; part of the gene cluster that mediates the biosynthesis of a family of the mycotoxins cytochalasins E and K. The hybrid PKS-NRPS synthetase ccsA and the enoyl reductase ccsC are responsible for fusion of phenylalanine with an octaketide backbone and subsequent release of the stable tetramic acid precursor. The polyketide synthase module (PKS) of the PKS-NRPS ccsA is responsible for the synthesis of the octaketide backbone. The downstream nonribosomal peptide synthetase (NRPS) amidates the carboxyl end of the octaketide with a phenylalanine. A reductase-like domain (R) at the C-terminus catalyzes the reductive release of the polyketide-amino acid intermediate. Because ccsA lacks a designated enoylreductase (ER) domain, the required activity is provided the enoyl reductase ccsC. Upon formation of the 11-membered carbocycle-fused perhydroisoindolone intermediate, a number of oxidative steps are required to afford the final cytochalasin E and K, including two hydroxylations at C17 and C18, one alcohol oxidation at C17, one epoxidation at C6 and C7 and two Baeyer-Villiger oxidations. The oxidative modification at C17, C18 and the C6-C7 epoxidation are likely to be catalyzed by the two cytochrome P450 oxygenases ccsD and ccsG. CcsD may be responsible for the epoxidation of the C6-C7 double bond. CcsG may be responsible for the successive oxidative modifications at C17 and C18. The double Baeyer-Villiger oxidations of ketocytochalasin to precytochalasin and cytochalasin Z(16) are among the final steps leading to cytochalasin E and K and are catalyzed by ccsB. The first oxygen insertion step follows that of the classic BVMO mechanism, generating the ester precytochalasin. Release of precytochalasin into an aqueous environment can generate the shunt product iso-precytochalasin through spontaneous isomerization. Alternatively, precytochalasin can undergo further oxidation by ccsB to yield the in-line carbonate-containing cytochalasin Z(16). Cytochalasin Z(16) is a precursor to cytochalasin E and cytochalasin K, whereas iso-precytochalasin is a precursor to cytochalasin Z(17) and rosellichalasin. The hydrolyase ccsE may catalyze hydrolysis of epoxide bond in cytochalasin E to afford cytochalasin K. The function of ccsF has not been assigned but it may play a role in post-PKS-NRPS biosynthetic step, resistance or transport of cytochalasins and related PKS-NRPS products. The protein is Cytochrome P450 monooxygenase ccsD of Aspergillus clavatus (strain ATCC 1007 / CBS 513.65 / DSM 816 / NCTC 3887 / NRRL 1 / QM 1276 / 107).